A 397-amino-acid polypeptide reads, in one-letter code: ATP-dependent RNA helicase eIF4A (397 aa).

The Q motif signature appears at 23–51; the sequence is YTFDDLNLKPNIVRGIFGYGYESPSAIQQ. One can recognise a Helicase ATP-binding domain in the interval 54-224; that stretch reads ILPITEGRDV…TKFMNNPVRI (171 aa). ATP is bound at residue 67-74; that stretch reads AQSGTGKT. The short motif at 172 to 175 is the DEAD box element; sequence DEAD. The 162-residue stretch at 235-396 folds into the Helicase C-terminal domain; that stretch reads GIKQFYINVE…EMPADIGALF (162 aa).

This sequence belongs to the DEAD box helicase family. eIF4A subfamily. In terms of assembly, component of the eIF4F complex, which composition varies with external and internal environmental conditions. It is composed of at least eIF4A, eIF4E and eIF4G.

It localises to the cytoplasm. The catalysed reaction is ATP + H2O = ADP + phosphate + H(+). In terms of biological role, ATP-dependent RNA helicase which is a subunit of the eIF4F complex involved in cap recognition and is required for mRNA binding to ribosome. In the current model of translation initiation, eIF4A unwinds RNA secondary structures in the 5'-UTR of mRNAs which is necessary to allow efficient binding of the small ribosomal subunit, and subsequent scanning for the initiator codon. The polypeptide is ATP-dependent RNA helicase eIF4A (TIF1) (Debaryomyces hansenii (strain ATCC 36239 / CBS 767 / BCRC 21394 / JCM 1990 / NBRC 0083 / IGC 2968) (Yeast)).